The chain runs to 704 residues: Elongation factor G (704 aa).

Residues 8–291 (VRYRNIGISA…AVVEYLPSPS (284 aa)) form the tr-type G domain. GTP-binding positions include 17–24 (AHIDAGKT), 88–92 (DTPGH), and 142–145 (NKMD).

It belongs to the TRAFAC class translation factor GTPase superfamily. Classic translation factor GTPase family. EF-G/EF-2 subfamily.

The protein resides in the cytoplasm. Catalyzes the GTP-dependent ribosomal translocation step during translation elongation. During this step, the ribosome changes from the pre-translocational (PRE) to the post-translocational (POST) state as the newly formed A-site-bound peptidyl-tRNA and P-site-bound deacylated tRNA move to the P and E sites, respectively. Catalyzes the coordinated movement of the two tRNA molecules, the mRNA and conformational changes in the ribosome. This is Elongation factor G from Blochmanniella pennsylvanica (strain BPEN).